The chain runs to 84 residues: Small ribosomal subunit protein bS16 (84 aa).

It belongs to the bacterial ribosomal protein bS16 family.

The sequence is that of Small ribosomal subunit protein bS16 from Endomicrobium trichonymphae.